A 365-amino-acid chain; its full sequence is Aspartate-semialdehyde dehydrogenase (365 aa).

Threonine 13, glycine 14, serine 15, valine 16, serine 38, serine 41, leucine 85, and aspartate 86 together coordinate NADP(+). At threonine 13 the chain carries Phosphothreonine. Cysteine 156 serves as the catalytic Acyl-thioester intermediate. Glycine 188 is a binding site for NADP(+). Histidine 256 serves as the catalytic Proton acceptor. Serine 318 and serine 323 each carry phosphoserine. Position 343 (asparagine 343) interacts with NADP(+).

It belongs to the aspartate-semialdehyde dehydrogenase family. As to quaternary structure, homotetramer.

It localises to the cytoplasm. Its subcellular location is the cytosol. The protein resides in the nucleus. The enzyme catalyses L-aspartate 4-semialdehyde + phosphate + NADP(+) = 4-phospho-L-aspartate + NADPH + H(+). It participates in amino-acid biosynthesis; L-methionine biosynthesis via de novo pathway; L-homoserine from L-aspartate: step 2/3. Its pathway is amino-acid biosynthesis; L-threonine biosynthesis; L-threonine from L-aspartate: step 2/5. Functionally, catalyzes the NADPH-dependent formation of L-aspartate 4-semialdehyde (L-ASA) by the reductive dephosphorylation of 4-phospho-L-aspartate. Mediates the second step in the biosynthesis of amino acids that derive from aspartate (the aspartate family of amino acids), including methioinine and threonine, the latter of which is a precursor to isoleucine. In Saccharomyces cerevisiae (strain ATCC 204508 / S288c) (Baker's yeast), this protein is Aspartate-semialdehyde dehydrogenase (HOM2).